A 309-amino-acid polypeptide reads, in one-letter code: MSAKIIRIATRQSPLALWQANHVREMLVKQWPNLSIELLPMITSGDRFLKDKLLSAGGKGLFVKELEEALLDKRADLAVHSTKDMPAQLPDGLLLTAICKRDNPFDALISPQFKSLAALPKNAIIGTSSLRRQSQLLAYNPNLQIKTLRGNIHTRLSKLESGEYQAIILAAAGLERMGLAHHITQLIPDDIMLPTCAQGALCIECRTDDLEIQELVHGLNDPISALCVHTERRVNAKLGGNCHIPFAVYCTITEEKLLLLRAKVLNMDGSQMIDDEQQGKIAEAEVIADRCTESLMTKGAMSLLSTIPS.

Cys-242 carries the post-translational modification S-(dipyrrolylmethanemethyl)cysteine.

It belongs to the HMBS family. In terms of assembly, monomer. Dipyrromethane serves as cofactor.

It catalyses the reaction 4 porphobilinogen + H2O = hydroxymethylbilane + 4 NH4(+). It participates in porphyrin-containing compound metabolism; protoporphyrin-IX biosynthesis; coproporphyrinogen-III from 5-aminolevulinate: step 2/4. Functionally, tetrapolymerization of the monopyrrole PBG into the hydroxymethylbilane pre-uroporphyrinogen in several discrete steps. The chain is Porphobilinogen deaminase from Legionella pneumophila subsp. pneumophila (strain Philadelphia 1 / ATCC 33152 / DSM 7513).